The primary structure comprises 407 residues: tRNA (guanine-N(7)-)-methyltransferase non-catalytic subunit wuho (407 aa).

3 WD repeats span residues 83-124 (AIEV…ARLL), 171-210 (GHLSVVFDILWTDDQQHIITCDRDDKIRVTNYPATFDIHS), and 214-252 (GHKEFVSGLALLTEQHIVSSSGDKTLRVWNFIEGKELLI).

It belongs to the WD repeat TRM82 family. In terms of assembly, forms a heterodimer with the catalytic subunit Mettl1. Interacts with mei-P26 and weakly interacts with bgcn; required for the function or formation of the mei-P26-bgcn-bam-sxl complex. Interacts with nanos; may be involved in mei-P26-dependent derepression of the BMP signaling pathway. Interacts with Myc; the interaction may be mediated by mei-P26 and may be involved in the regulation of ribosome biogenesis. In terms of tissue distribution, in testis, it is present at high level in hub cells, a niche for germline stem cells of testis. Ubiquitously expressed in all testicular cells throughout spermatogenesis. Ubiquitously expressed in all germline and somatic cells of the ovary.

The protein resides in the nucleus. The protein localises to the cytoplasm. Its pathway is tRNA modification; N(7)-methylguanine-tRNA biosynthesis. In terms of biological role, required for the Mettl1-dependent formation of N(7)-methylguanine at position 46 (m7G46) in tRNA. In the Mettl1-wuho methyltransferase complex, it is required to stabilize and induce conformational changes of the catalytic subunit. Required for binding of nanos mRNA and repression of translation by the mei-P26-bgcn-bam-sxl complex. May cooperate with mei-P26 and nanos to derepress the BMP signaling pathway. May cooperate with mei-P26 to suppress expression of a subset of microRNAs. May cooperate with mei-P26 to regulate bam expression levels in germline cells during gametogenesis. Required to promote mitosis to meiosis transition during gametogenesis. May regulate germline cell division in part by regulating ribosome biogenesis. In Drosophila ananassae (Fruit fly), this protein is tRNA (guanine-N(7)-)-methyltransferase non-catalytic subunit wuho.